Reading from the N-terminus, the 275-residue chain is 4-hydroxy-3-methylbut-2-enyl diphosphate reductase (275 aa).

Cys12 contacts [4Fe-4S] cluster. (2E)-4-hydroxy-3-methylbut-2-enyl diphosphate contacts are provided by His36 and His70. Dimethylallyl diphosphate is bound by residues His36 and His70. Isopentenyl diphosphate-binding residues include His36 and His70. Cys92 serves as a coordination point for [4Fe-4S] cluster. Residue His120 participates in (2E)-4-hydroxy-3-methylbut-2-enyl diphosphate binding. His120 is a binding site for dimethylallyl diphosphate. His120 lines the isopentenyl diphosphate pocket. Catalysis depends on Glu122, which acts as the Proton donor. Residue Thr158 participates in (2E)-4-hydroxy-3-methylbut-2-enyl diphosphate binding. Cys186 is a [4Fe-4S] cluster binding site. (2E)-4-hydroxy-3-methylbut-2-enyl diphosphate contacts are provided by Ser214, Ser215, Asn216, and Ser258. Ser214, Ser215, Asn216, and Ser258 together coordinate dimethylallyl diphosphate. Residues Ser214, Ser215, Asn216, and Ser258 each coordinate isopentenyl diphosphate.

The protein belongs to the IspH family. [4Fe-4S] cluster serves as cofactor.

It catalyses the reaction isopentenyl diphosphate + 2 oxidized [2Fe-2S]-[ferredoxin] + H2O = (2E)-4-hydroxy-3-methylbut-2-enyl diphosphate + 2 reduced [2Fe-2S]-[ferredoxin] + 2 H(+). The enzyme catalyses dimethylallyl diphosphate + 2 oxidized [2Fe-2S]-[ferredoxin] + H2O = (2E)-4-hydroxy-3-methylbut-2-enyl diphosphate + 2 reduced [2Fe-2S]-[ferredoxin] + 2 H(+). It participates in isoprenoid biosynthesis; dimethylallyl diphosphate biosynthesis; dimethylallyl diphosphate from (2E)-4-hydroxy-3-methylbutenyl diphosphate: step 1/1. It functions in the pathway isoprenoid biosynthesis; isopentenyl diphosphate biosynthesis via DXP pathway; isopentenyl diphosphate from 1-deoxy-D-xylulose 5-phosphate: step 6/6. Its function is as follows. Catalyzes the conversion of 1-hydroxy-2-methyl-2-(E)-butenyl 4-diphosphate (HMBPP) into a mixture of isopentenyl diphosphate (IPP) and dimethylallyl diphosphate (DMAPP). Acts in the terminal step of the DOXP/MEP pathway for isoprenoid precursor biosynthesis. This chain is 4-hydroxy-3-methylbut-2-enyl diphosphate reductase, found in Sulfurimonas denitrificans (strain ATCC 33889 / DSM 1251) (Thiomicrospira denitrificans (strain ATCC 33889 / DSM 1251)).